Consider the following 1199-residue polypeptide: DNA-directed RNA polymerase subunit beta (1199 aa).

Residues 1177-1199 (EQEEKKAKEAEQETAEKEETKTE) form a disordered region.

Belongs to the RNA polymerase beta chain family. As to quaternary structure, the RNAP catalytic core consists of 2 alpha, 1 beta, 1 beta' and 1 omega subunit. When a sigma factor is associated with the core the holoenzyme is formed, which can initiate transcription.

It carries out the reaction RNA(n) + a ribonucleoside 5'-triphosphate = RNA(n+1) + diphosphate. Functionally, DNA-dependent RNA polymerase catalyzes the transcription of DNA into RNA using the four ribonucleoside triphosphates as substrates. The protein is DNA-directed RNA polymerase subunit beta of Ligilactobacillus salivarius (strain UCC118) (Lactobacillus salivarius).